The following is a 140-amino-acid chain: D-ribose pyranase (140 aa).

Histidine 20 functions as the Proton donor in the catalytic mechanism. Residues aspartate 28, histidine 99, and 121–123 (YSS) each bind substrate.

This sequence belongs to the RbsD / FucU family. RbsD subfamily. Homodecamer.

Its subcellular location is the cytoplasm. It carries out the reaction beta-D-ribopyranose = beta-D-ribofuranose. Its pathway is carbohydrate metabolism; D-ribose degradation; D-ribose 5-phosphate from beta-D-ribopyranose: step 1/2. Catalyzes the interconversion of beta-pyran and beta-furan forms of D-ribose. The sequence is that of D-ribose pyranase from Pseudothermotoga lettingae (strain ATCC BAA-301 / DSM 14385 / NBRC 107922 / TMO) (Thermotoga lettingae).